Here is a 521-residue protein sequence, read N- to C-terminus: MSASEGMKFKFHSGEKVLCFEPDPTKARVLYDAKIVDVIVGKDEKGRKIPEYLIHFNGWNRSWDRWAAEDHVLRDTDENRRLQRKLARKAVARLRSTGRKKKRCRLPGVDSVLKGLPTEEKDENDENSLSSSSDCSENKDEEISEESDIEEKTEVKEEPELQTRREMEERTITIEIPEVLKKQLEDDCYYINRRKRLVKLPCQTNIITILESYVKHFAINAAFSANERPRHHHVMPHANMNVHYIPAEKNVDLCKEMVDGLRITFDYTLPLVLLYPYEQAQYKKVTSSKFFLPIKESATSTNRSQEELSPSPPLLNPSTPQSTESQPTTGEPATPKRRKAEPEALQSLRRSTRHSANCDRLSESSASPQPKRRQQDTSGSMPKLFLHLEKKTPVHSRSSSPIPLTPSKEGSAVFAGFEGRRTNEINEVLSWKLVPDNYPPGDQPPPPSYIYGAQHLLRLFVKLPEILGKMSFSEKNLKALLKHFDLFLRFLAEYHDDFFPESAYVAACEAHYSTKNPRAIY.

The 59-residue stretch at Ser-13–His-71 folds into the Tudor-knot domain. Disordered regions lie at residues Lys-114 to Glu-166, Ala-298 to Ser-380, and Lys-390 to Glu-409. Positions Lys-139 to Ile-149 are enriched in acidic residues. Basic and acidic residues predominate over residues Glu-150–Glu-166. Positions Glu-168–Pro-517 constitute an MRG domain. A required for the histone acetyltransferase activity of the MSL complex region spans residues Phe-290 to Pro-440. Phosphoserine occurs at positions 309 and 311. Over residues Asn-316 to Thr-329 the composition is skewed to low complexity. Phosphoserine is present on residues Ser-367 and Ser-400. Thr-405 carries the post-translational modification Phosphothreonine. Ser-407 and Ser-411 each carry phosphoserine.

Component of the MSL histone acetyltransferase complex at least composed of the KAT8/MOF, MSL1/hampin, MSL2 and MSL3. Interacts (via the MRG domain) with MSL1 and KAT8/MOF.

The protein localises to the nucleus. Its function is as follows. Non-catalytic component of the MSL histone acetyltransferase complex, a multiprotein complex that mediates the majority of histone H4 acetylation at 'Lys-16' (H4K16ac), an epigenetic mark that prevents chromatin compaction. The MSL complex is required for chromosome stability and genome integrity by maintaining homeostatic levels of H4K16ac. The MSL complex is also involved in gene dosage by promoting up-regulation of genes expressed by the X chromosome. X up-regulation is required to compensate for autosomal biallelic expression. The MSL complex also participates in gene dosage compensation by promoting expression of Tsix non-coding RNA. Acts as a histone reader that specifically recognizes and binds histone H4 monomethylated at 'Lys-20' (H4K20Me1) in a DNA-dependent manner and is proposed to be involved in chromosomal targeting of the MSL complex. May play a role X inactivation in females. The chain is MSL complex subunit 3 (MSL3) from Pongo abelii (Sumatran orangutan).